We begin with the raw amino-acid sequence, 271 residues long: Glutamate racemase (271 aa).

Residues 13 to 14 (DS) and 45 to 46 (YG) each bind substrate. Residue C77 is the Proton donor/acceptor of the active site. 78-79 (NT) contributes to the substrate binding site. C192 acts as the Proton donor/acceptor in catalysis. Residue 193–194 (TH) participates in substrate binding.

The protein belongs to the aspartate/glutamate racemases family.

The enzyme catalyses L-glutamate = D-glutamate. Its pathway is cell wall biogenesis; peptidoglycan biosynthesis. In terms of biological role, provides the (R)-glutamate required for cell wall biosynthesis. This Sinorhizobium medicae (strain WSM419) (Ensifer medicae) protein is Glutamate racemase.